The sequence spans 365 residues: Cobalt-precorrin-5B C(1)-methyltransferase (365 aa).

Belongs to the CbiD family.

The catalysed reaction is Co-precorrin-5B + S-adenosyl-L-methionine = Co-precorrin-6A + S-adenosyl-L-homocysteine. It functions in the pathway cofactor biosynthesis; adenosylcobalamin biosynthesis; cob(II)yrinate a,c-diamide from sirohydrochlorin (anaerobic route): step 6/10. Catalyzes the methylation of C-1 in cobalt-precorrin-5B to form cobalt-precorrin-6A. This Moorella thermoacetica (strain ATCC 39073 / JCM 9320) protein is Cobalt-precorrin-5B C(1)-methyltransferase.